Consider the following 814-residue polypeptide: Protein fam-161 (814 aa).

The span at isoleucine 71–histidine 87 shows a compositional bias: polar residues. 4 disordered regions span residues isoleucine 71–glutamine 130, arginine 150–alanine 255, serine 569–threonine 610, and methionine 714–alanine 814. Basic and acidic residues predominate over residues methionine 99–glutamate 111. The span at serine 174 to serine 193 shows a compositional bias: low complexity. 2 stretches are compositionally biased toward polar residues: residues glycine 194 to histidine 207 and arginine 216 to asparagine 235. A compositionally biased stretch (basic residues) spans proline 236 to threonine 249. 2 stretches are compositionally biased toward polar residues: residues arginine 570 to glutamate 583 and glutamate 594 to threonine 610. Positions serine 606–asparagine 689 form a coiled coil. Residues methionine 714–serine 727 are compositionally biased toward basic and acidic residues. Over residues glutamine 728–glycine 745 the composition is skewed to polar residues. The span at lysine 751–lysine 765 shows a compositional bias: basic and acidic residues. 2 stretches are compositionally biased toward low complexity: residues serine 766–glutamate 779 and serine 795–alanine 814.

Belongs to the FAM161 family. In terms of tissue distribution, expressed in amphid and phasmid ciliated neurons.

Its subcellular location is the cell projection. It is found in the cilium. The protein localises to the cytoplasm. The protein resides in the cytoskeleton. It localises to the cilium axoneme. This Caenorhabditis elegans protein is Protein fam-161.